The primary structure comprises 739 residues: TonB-dependent heme receptor A (739 aa).

A signal peptide spans 1–22 (MKMKKQCATLTFFIGLHGYTIA). The region spanning 38–150 (GHHERQPDRS…FAGTIKLETK (113 aa)) is the TBDR plug domain. Positions 161–739 (LLGGLLKYGY…NIKLSISKQF (579 aa)) constitute a TBDR beta-barrel domain.

It belongs to the TonB-dependent receptor family.

It is found in the cell outer membrane. Its function is as follows. Heme receptor. This Haemophilus ducreyi (strain 35000HP / ATCC 700724) protein is TonB-dependent heme receptor A (tdhA).